The following is a 185-amino-acid chain: Large ribosomal subunit protein uL5 (185 aa).

Belongs to the universal ribosomal protein uL5 family. In terms of assembly, part of the 50S ribosomal subunit; part of the 5S rRNA/L5/L18/L25 subcomplex. Contacts the 5S rRNA and the P site tRNA. Forms a bridge to the 30S subunit in the 70S ribosome.

Functionally, this is one of the proteins that bind and probably mediate the attachment of the 5S RNA into the large ribosomal subunit, where it forms part of the central protuberance. In the 70S ribosome it contacts protein S13 of the 30S subunit (bridge B1b), connecting the 2 subunits; this bridge is implicated in subunit movement. Contacts the P site tRNA; the 5S rRNA and some of its associated proteins might help stabilize positioning of ribosome-bound tRNAs. This chain is Large ribosomal subunit protein uL5, found in Rhizobium rhizogenes (strain K84 / ATCC BAA-868) (Agrobacterium radiobacter).